A 198-amino-acid polypeptide reads, in one-letter code: Inner membrane-spanning protein YciB (198 aa).

A run of 5 helical transmembrane segments spans residues 36–56 (IYSA…ALFI), 67–87 (LTLI…SETF), 90–110 (WKAP…HFIG), 135–155 (IAWI…AFTF), and 162–182 (FKVF…GIYL).

This sequence belongs to the YciB family.

The protein localises to the cell inner membrane. Functionally, plays a role in cell envelope biogenesis, maintenance of cell envelope integrity and membrane homeostasis. The chain is Inner membrane-spanning protein YciB from Pseudomonas fluorescens (strain Pf0-1).